Consider the following 320-residue polypeptide: UDP-3-O-acyl-N-acetylglucosamine deacetylase (320 aa).

Residues H92, H251, and D255 each coordinate Zn(2+). Residue H278 is the Proton donor of the active site.

It belongs to the LpxC family. It depends on Zn(2+) as a cofactor.

The catalysed reaction is a UDP-3-O-[(3R)-3-hydroxyacyl]-N-acetyl-alpha-D-glucosamine + H2O = a UDP-3-O-[(3R)-3-hydroxyacyl]-alpha-D-glucosamine + acetate. Its pathway is glycolipid biosynthesis; lipid IV(A) biosynthesis; lipid IV(A) from (3R)-3-hydroxytetradecanoyl-[acyl-carrier-protein] and UDP-N-acetyl-alpha-D-glucosamine: step 2/6. Catalyzes the hydrolysis of UDP-3-O-myristoyl-N-acetylglucosamine to form UDP-3-O-myristoylglucosamine and acetate, the committed step in lipid A biosynthesis. In Psychrobacter arcticus (strain DSM 17307 / VKM B-2377 / 273-4), this protein is UDP-3-O-acyl-N-acetylglucosamine deacetylase.